Here is a 574-residue protein sequence, read N- to C-terminus: Amino-acid acetyltransferase, mitochondrial (574 aa).

A mitochondrion-targeting transit peptide spans 1-13 (MWRRIFAHELKYD). Residues 392–560 (KGAKPSSNSP…KRLREFMRSV (169 aa)) form the N-acetyltransferase domain.

The protein belongs to the acetyltransferase family. In terms of assembly, interacts with the acetylglutamate kinase chain of AGR5,6.

It localises to the mitochondrion. It catalyses the reaction L-glutamate + acetyl-CoA = N-acetyl-L-glutamate + CoA + H(+). It participates in amino-acid biosynthesis; L-arginine biosynthesis; N(2)-acetyl-L-ornithine from L-glutamate: step 1/4. With respect to regulation, feedback inhibition by L-arginine. Its function is as follows. N-acetylglutamate synthase involved in arginine biosynthesis. In Saccharomyces cerevisiae (strain RM11-1a) (Baker's yeast), this protein is Amino-acid acetyltransferase, mitochondrial (ARG2).